Reading from the N-terminus, the 154-residue chain is Putative esterase AF_2264 (154 aa).

It belongs to the thioesterase PaaI family.

This chain is Putative esterase AF_2264, found in Archaeoglobus fulgidus (strain ATCC 49558 / DSM 4304 / JCM 9628 / NBRC 100126 / VC-16).